A 451-amino-acid polypeptide reads, in one-letter code: Crh-like protein 2 (451 aa).

A signal peptide spans 1 to 21 (MQFNSLVLLAGATILSPFVQA). The 220-residue stretch at 22-241 (QTWTTCNPLN…FTKVPFTMYV (220 aa)) folds into the GH16 domain. An intrachain disulfide couples C27 to C34. N-linked (GlcNAc...) asparagine glycans are attached at residues N31, N43, N49, and N59. Catalysis depends on E121, which acts as the Nucleophile. The active-site Proton donor is the E125. E125 is a chitin binding site. N130, N143, and N165 each carry an N-linked (GlcNAc...) asparagine glycan. 3 residues coordinate chitin: R206, W210, and T222. A glycan (N-linked (GlcNAc...) asparagine) is linked at N273. The chain crosses the membrane as a helical span at residues 305–325 (VYCGGGAAVAALVSAFLFTFL). An N-linked (GlcNAc...) asparagine glycan is attached at N366.

Belongs to the glycosyl hydrolase 16 family. CRH1 subfamily. In terms of assembly, forms homodimers as well as heterodimers with other crh protein members crh1 and crh3. Dimerization may be necessary for the transglycosylation activity.

Its subcellular location is the membrane. It carries out the reaction Random endo-hydrolysis of N-acetyl-beta-D-glucosaminide (1-&gt;4)-beta-linkages in chitin and chitodextrins.. In terms of biological role, dual chitinase/transglycosylase that plays a role in cell wall architecture. Chitinase and transglycosylase activities are coupled. Required for the polysaccharide cross-linking at the septa and the cell wall. More specifically, transfers chitin to 1,6-beta-glucan in the cell wall. The protein is Crh-like protein 2 of Botryotinia fuckeliana (strain B05.10) (Noble rot fungus).